The chain runs to 547 residues: Leiomodin-2 (547 aa).

The interaction with tropomyosin alpha stretch occupies residues 1–47 (MSTFGYRRGLSKYESIDEDELLASLSAEELKELERELEDIEPDRNLP). Interaction with actin stretches follow at residues 1–161 (MSTF…SDNS), 162–497 (KPKI…KEIK), and 521–540 (AHENLMEAIRGSSIKQLKRV). Phosphoserine occurs at positions 11, 15, and 24. Positions 16–41 (IDEDELLASLSAEELKELERELEDIE) form a coiled coil. Disordered stretches follow at residues 91 to 162 (KVAE…DNSK) and 352 to 533 (MDKQ…RGSS). Acidic residues-rich tracts occupy residues 95–104 (DKEESEEELI) and 112–139 (VSEEVYTEEEEEESQEEEEEEDSDEEER). The stretch at 113–148 (SEEVYTEEEEEESQEEEEEEDSDEEERTIETAKGIN) forms a coiled coil. Over residues 149 to 160 (GTVNYDSVNSDN) the composition is skewed to polar residues. Basic and acidic residues predominate over residues 352 to 367 (MDKQRQKRLQEQKQQE). At serine 400 the chain carries Phosphoserine. A compositionally biased stretch (pro residues) spans 419–449 (ATPPPPPPPPPPPPPSSQRLPPPPPPPPPPL). Positions 465–475 (QQESAQRALQN) are enriched in polar residues. Residues 477–487 (QKKKKGKKVKK) are compositionally biased toward basic residues. The span at 494 to 512 (KEIKNSLRSVQEKKMEDSS) shows a compositional bias: basic and acidic residues. The region spanning 521 to 540 (AHENLMEAIRGSSIKQLKRV) is the WH2 domain.

This sequence belongs to the tropomodulin family. In terms of assembly, can bind at least three actin monomers and thereby provides a nucleus for actin filament formation. Interacts (via N-terminus) with tropomyosin alpha (TPM1) (via N-terminus). May also interact with TPM2 (via N-terminus). Interacts with FLII. In terms of tissue distribution, specifically expressed in heart and skeletal muscles, with higher levels in heart (at protein level). Not expressed in other tissues.

It is found in the cytoplasm. Its subcellular location is the myofibril. The protein localises to the sarcomere. The protein resides in the m line. It localises to the cytoskeleton. Mediates nucleation of actin filaments and thereby promotes actin polymerization. Plays a role in the regulation of actin filament length. Required for normal sarcomere organization in the heart, and for normal heart function. The polypeptide is Leiomodin-2 (LMOD2) (Homo sapiens (Human)).